We begin with the raw amino-acid sequence, 320 residues long: Homoserine kinase (320 aa).

An ATP-binding site is contributed by 100–110 (PLSSGMGSSAA).

The protein belongs to the GHMP kinase family. Homoserine kinase subfamily.

The protein localises to the cytoplasm. The catalysed reaction is L-homoserine + ATP = O-phospho-L-homoserine + ADP + H(+). The protein operates within amino-acid biosynthesis; L-threonine biosynthesis; L-threonine from L-aspartate: step 4/5. Catalyzes the ATP-dependent phosphorylation of L-homoserine to L-homoserine phosphate. This chain is Homoserine kinase, found in Chlorobium phaeobacteroides (strain DSM 266 / SMG 266 / 2430).